The following is a 385-amino-acid chain: DNA replication and repair protein RecF (385 aa).

Residue 30–37 participates in ATP binding; it reads GSNGFGKT.

This sequence belongs to the RecF family.

It localises to the cytoplasm. In terms of biological role, the RecF protein is involved in DNA metabolism; it is required for DNA replication and normal SOS inducibility. RecF binds preferentially to single-stranded, linear DNA. It also seems to bind ATP. The sequence is that of DNA replication and repair protein RecF from Mycobacterium avium (strain 104).